An 80-amino-acid polypeptide reads, in one-letter code: Acyl carrier protein (80 aa).

In terms of domain architecture, Carrier spans 2-77 (KNIEERIKKI…KSIDFIQNKN (76 aa)). Position 37 is an O-(pantetheine 4'-phosphoryl)serine (Ser37).

The protein belongs to the acyl carrier protein (ACP) family. 4'-phosphopantetheine is transferred from CoA to a specific serine of apo-ACP by AcpS. This modification is essential for activity because fatty acids are bound in thioester linkage to the sulfhydryl of the prosthetic group.

The protein localises to the cytoplasm. It participates in lipid metabolism; fatty acid biosynthesis. Carrier of the growing fatty acid chain in fatty acid biosynthesis. The sequence is that of Acyl carrier protein from Buchnera aphidicola subsp. Acyrthosiphon pisum (strain 5A).